The sequence spans 94 residues: MTDAVGSIDMPDAQDEAPDSKKSRKGGKRGKKGPLKRLALFYRQIVADVRKVVWPSRNQLTTYTTVVIIFVVIMIGLVTLIDYGFSHAAKYVFG.

Residues 1 to 32 (MTDAVGSIDMPDAQDEAPDSKKSRKGGKRGKK) form a disordered region. Residues 22–32 (KSRKGGKRGKK) show a composition bias toward basic residues. A helical membrane pass occupies residues 65–85 (TVVIIFVVIMIGLVTLIDYGF).

This sequence belongs to the SecE/SEC61-gamma family. Component of the Sec protein translocase complex. Heterotrimer consisting of SecY, SecE and SecG subunits. The heterotrimers can form oligomers, although 1 heterotrimer is thought to be able to translocate proteins. Interacts with the ribosome. Interacts with SecDF, and other proteins may be involved. Interacts with SecA.

Its subcellular location is the cell membrane. In terms of biological role, essential subunit of the Sec protein translocation channel SecYEG. Clamps together the 2 halves of SecY. May contact the channel plug during translocation. The chain is Protein translocase subunit SecE from Streptomyces lividans.